The primary structure comprises 184 residues: uncharacterized protein (184 aa).

The helical transmembrane segment at 5–27 (YLLATAMFLIVCVYVISETVNLH) threads the bilayer.

The protein resides in the membrane. This is an uncharacterized protein from Methanocaldococcus jannaschii (strain ATCC 43067 / DSM 2661 / JAL-1 / JCM 10045 / NBRC 100440) (Methanococcus jannaschii).